Consider the following 479-residue polypeptide: PTS system MurNAc-GlcNAc-specific EIIBC component (479 aa).

A PTS EIIB type-1 domain is found at 5–87 (QILAEHIIDA…SELSGAPLGE (83 aa)). Cys-27 serves as the catalytic Phosphocysteine intermediate; for EIIB activity. One can recognise a PTS EIIC type-1 domain in the interval 125–479 (KTIANIFIPL…AMRESDTLGD (355 aa)). 10 helical membrane-spanning segments follow: residues 130–150 (IFIPLIPAFIGAGLIGGIAAV), 169–189 (VTVFNVIKDGMLAYLAIFTGI), 195–215 (FGATPGLGGVIGGTTLLTGLT), 229–249 (LQPGQGGIIGVIFAVWLLSII), 269–289 (ITLFIIGLLTIFIFMPLAGFV), 303–323 (IGGVFSGFIIGAFFLPLVMLG), 344–364 (LLPIAAMAGAGQVGAALALWV), 379–399 (ALPVGFLGIGEPLIYGVTLPL), 403–423 (FITACIGGGIGGAVIGGIGHI), and 445–465 (LGYIAGLLVAYAGGFIFTYFF).

It localises to the cell membrane. It catalyses the reaction N-acetyl-beta-D-muramate-(1-&gt;4)-N-acetyl-D-glucosamine(out) + N(pros)-phospho-L-histidyl-[protein] = 6-phospho-N-acetyl-beta-D-muramate-(1-&gt;4)-N-acetyl-D-glucosamine(in) + L-histidyl-[protein]. It participates in cell wall biogenesis; peptidoglycan recycling. Its function is as follows. The phosphoenolpyruvate-dependent sugar phosphotransferase system (sugar PTS), a major carbohydrate active transport system, catalyzes the phosphorylation of incoming sugar substrates concomitantly with their translocation across the cell membrane. This system is involved in the uptake and phosphorylation of MurNAc-GlcNAc, the principle peptidoglycan turnover product of S.aureus, yielding cytoplasmic MurNAc 6P-GlcNAc. The sequence is that of PTS system MurNAc-GlcNAc-specific EIIBC component from Staphylococcus saprophyticus subsp. saprophyticus (strain ATCC 15305 / DSM 20229 / NCIMB 8711 / NCTC 7292 / S-41).